Reading from the N-terminus, the 272-residue chain is Shikimate dehydrogenase (NADP(+)) (272 aa).

Residues 14-16 (SKS) and threonine 61 contribute to the shikimate site. Lysine 65 functions as the Proton acceptor in the catalytic mechanism. Shikimate-binding residues include asparagine 86 and aspartate 102. NADP(+) is bound by residues 126–130 (GAGGA), 150–155 (NRTASK), and methionine 214. Tyrosine 216 contributes to the shikimate binding site. Glycine 239 provides a ligand contact to NADP(+).

It belongs to the shikimate dehydrogenase family. In terms of assembly, homodimer.

The catalysed reaction is shikimate + NADP(+) = 3-dehydroshikimate + NADPH + H(+). It functions in the pathway metabolic intermediate biosynthesis; chorismate biosynthesis; chorismate from D-erythrose 4-phosphate and phosphoenolpyruvate: step 4/7. Functionally, involved in the biosynthesis of the chorismate, which leads to the biosynthesis of aromatic amino acids. Catalyzes the reversible NADPH linked reduction of 3-dehydroshikimate (DHSA) to yield shikimate (SA). This chain is Shikimate dehydrogenase (NADP(+)), found in Pseudoalteromonas atlantica (strain T6c / ATCC BAA-1087).